A 405-amino-acid chain; its full sequence is Glucose-1-phosphate adenylyltransferase (405 aa).

Residues Tyr96, Gly161, Glu176 to Lys177, and Ser194 each bind alpha-D-glucose 1-phosphate.

Belongs to the bacterial/plant glucose-1-phosphate adenylyltransferase family. In terms of assembly, homotetramer.

It catalyses the reaction alpha-D-glucose 1-phosphate + ATP + H(+) = ADP-alpha-D-glucose + diphosphate. Its pathway is glycan biosynthesis; glycogen biosynthesis. Its function is as follows. Involved in the biosynthesis of ADP-glucose, a building block required for the elongation reactions to produce glycogen. Catalyzes the reaction between ATP and alpha-D-glucose 1-phosphate (G1P) to produce pyrophosphate and ADP-Glc. In Aliivibrio fischeri (strain MJ11) (Vibrio fischeri), this protein is Glucose-1-phosphate adenylyltransferase.